The following is a 296-amino-acid chain: Ribosomal RNA small subunit methyltransferase H (296 aa).

S-adenosyl-L-methionine contacts are provided by residues 41 to 43 (GGH), Asp60, Phe87, Asp103, and Gln110.

It belongs to the methyltransferase superfamily. RsmH family.

Its subcellular location is the cytoplasm. The enzyme catalyses cytidine(1402) in 16S rRNA + S-adenosyl-L-methionine = N(4)-methylcytidine(1402) in 16S rRNA + S-adenosyl-L-homocysteine + H(+). Functionally, specifically methylates the N4 position of cytidine in position 1402 (C1402) of 16S rRNA. The chain is Ribosomal RNA small subunit methyltransferase H from Synechococcus elongatus (strain ATCC 33912 / PCC 7942 / FACHB-805) (Anacystis nidulans R2).